Consider the following 131-residue polypeptide: Bacteriohemerythrin (131 aa).

Residues histidine 20, glutamate 23, histidine 56, glutamate 60, histidine 75, histidine 79, histidine 117, and aspartate 122 each coordinate Fe cation.

It belongs to the hemerythrin family. As to quaternary structure, monomer.

Oxygen-binding protein. May be involved in a storage mechanism or for delivery to oxygen-requiring enzymes. The oxygen-binding site contains two iron atoms. This Aquifex aeolicus (strain VF5) protein is Bacteriohemerythrin.